Here is a 206-residue protein sequence, read N- to C-terminus: Protein-methionine-sulfoxide reductase heme-binding subunit MsrQ (206 aa).

6 consecutive transmembrane segments (helical) span residues 14 to 34 (IKPL…WLGA), 45 to 65 (FLTR…LAIT), 82 to 102 (MCGL…VWWD), 118 to 138 (PFIT…ATST), 149 to 169 (WQVL…HFWW), and 179 to 199 (QPLL…AAWW).

The protein belongs to the MsrQ family. In terms of assembly, heterodimer of a catalytic subunit (MsrP) and a heme-binding subunit (MsrQ). FMN is required as a cofactor. Requires heme b as cofactor.

The protein localises to the cell inner membrane. Part of the MsrPQ system that repairs oxidized periplasmic proteins containing methionine sulfoxide residues (Met-O), using respiratory chain electrons. Thus protects these proteins from oxidative-stress damage caused by reactive species of oxygen and chlorine generated by the host defense mechanisms. MsrPQ is essential for the maintenance of envelope integrity under bleach stress, rescuing a wide series of structurally unrelated periplasmic proteins from methionine oxidation. MsrQ provides electrons for reduction to the reductase catalytic subunit MsrP, using the quinone pool of the respiratory chain. This is Protein-methionine-sulfoxide reductase heme-binding subunit MsrQ from Bordetella bronchiseptica (strain ATCC BAA-588 / NCTC 13252 / RB50) (Alcaligenes bronchisepticus).